Consider the following 204-residue polypeptide: Holliday junction branch migration complex subunit RuvA (204 aa).

The tract at residues 1 to 64 is domain I; sequence MIGRLRGVVI…EDAQLLYGFN (64 aa). The segment at 65 to 143 is domain II; sequence HKQERALFRE…GWVSHDLFSP (79 aa). The tract at residues 144 to 155 is flexible linker; sequence AEISLPARESVL. The tract at residues 156–204 is domain III; it reads RAPDSSEEAASALVALGYKPQQASQIVSKIAKEGMSVEDIIRESLRSLV.

This sequence belongs to the RuvA family. In terms of assembly, homotetramer. Forms an RuvA(8)-RuvB(12)-Holliday junction (HJ) complex. HJ DNA is sandwiched between 2 RuvA tetramers; dsDNA enters through RuvA and exits via RuvB. An RuvB hexamer assembles on each DNA strand where it exits the tetramer. Each RuvB hexamer is contacted by two RuvA subunits (via domain III) on 2 adjacent RuvB subunits; this complex drives branch migration. In the full resolvosome a probable DNA-RuvA(4)-RuvB(12)-RuvC(2) complex forms which resolves the HJ.

The protein resides in the cytoplasm. The RuvA-RuvB-RuvC complex processes Holliday junction (HJ) DNA during genetic recombination and DNA repair, while the RuvA-RuvB complex plays an important role in the rescue of blocked DNA replication forks via replication fork reversal (RFR). RuvA specifically binds to HJ cruciform DNA, conferring on it an open structure. The RuvB hexamer acts as an ATP-dependent pump, pulling dsDNA into and through the RuvAB complex. HJ branch migration allows RuvC to scan DNA until it finds its consensus sequence, where it cleaves and resolves the cruciform DNA. The sequence is that of Holliday junction branch migration complex subunit RuvA from Aeromonas salmonicida (strain A449).